A 173-amino-acid chain; its full sequence is Large ribosomal subunit protein uL10 (173 aa).

It belongs to the universal ribosomal protein uL10 family. Part of the ribosomal stalk of the 50S ribosomal subunit. The N-terminus interacts with L11 and the large rRNA to form the base of the stalk. The C-terminus forms an elongated spine to which L12 dimers bind in a sequential fashion forming a multimeric L10(L12)X complex.

Its function is as follows. Forms part of the ribosomal stalk, playing a central role in the interaction of the ribosome with GTP-bound translation factors. The polypeptide is Large ribosomal subunit protein uL10 (Micrococcus luteus (strain ATCC 4698 / DSM 20030 / JCM 1464 / CCM 169 / CCUG 5858 / IAM 1056 / NBRC 3333 / NCIMB 9278 / NCTC 2665 / VKM Ac-2230) (Micrococcus lysodeikticus)).